Consider the following 284-residue polypeptide: Bifunctional protein FolD (284 aa).

Residue 166 to 168 (GAS) participates in NADP(+) binding.

The protein belongs to the tetrahydrofolate dehydrogenase/cyclohydrolase family. In terms of assembly, homodimer.

It catalyses the reaction (6R)-5,10-methylene-5,6,7,8-tetrahydrofolate + NADP(+) = (6R)-5,10-methenyltetrahydrofolate + NADPH. It carries out the reaction (6R)-5,10-methenyltetrahydrofolate + H2O = (6R)-10-formyltetrahydrofolate + H(+). The protein operates within one-carbon metabolism; tetrahydrofolate interconversion. Functionally, catalyzes the oxidation of 5,10-methylenetetrahydrofolate to 5,10-methenyltetrahydrofolate and then the hydrolysis of 5,10-methenyltetrahydrofolate to 10-formyltetrahydrofolate. In Legionella pneumophila (strain Paris), this protein is Bifunctional protein FolD.